Reading from the N-terminus, the 152-residue chain is 3-hydroxyacyl-[acyl-carrier-protein] dehydratase FabZ (152 aa).

H57 is a catalytic residue.

This sequence belongs to the thioester dehydratase family. FabZ subfamily.

The protein resides in the cytoplasm. It catalyses the reaction a (3R)-hydroxyacyl-[ACP] = a (2E)-enoyl-[ACP] + H2O. Functionally, involved in unsaturated fatty acids biosynthesis. Catalyzes the dehydration of short chain beta-hydroxyacyl-ACPs and long chain saturated and unsaturated beta-hydroxyacyl-ACPs. The sequence is that of 3-hydroxyacyl-[acyl-carrier-protein] dehydratase FabZ from Bradyrhizobium sp. (strain BTAi1 / ATCC BAA-1182).